We begin with the raw amino-acid sequence, 477 residues long: Asparaginyl-tRNA synthetase (477 aa).

A mitochondrion-targeting transit peptide spans methionine 1 to cysteine 14. Lysine 353 bears the N6-acetyllysine mark.

Belongs to the class-II aminoacyl-tRNA synthetase family. As to quaternary structure, homodimer. As to expression, expressed in brain and inner ear, including the cochlear epithelium and organ of Corti.

It is found in the mitochondrion matrix. It localises to the mitochondrion. It catalyses the reaction tRNA(Asn) + L-asparagine + ATP = L-asparaginyl-tRNA(Asn) + AMP + diphosphate + H(+). In terms of biological role, mitochondrial aminoacyl-tRNA synthetase that catalyzes the specific attachment of the asparagine amino acid (aa) to the homologous transfer RNA (tRNA), further participating in protein synthesis. The reaction occurs in a two steps: asparagine is first activated by ATP to form Asn-AMP and then transferred to the acceptor end of tRNA(Asn). In Mus musculus (Mouse), this protein is Asparaginyl-tRNA synthetase.